A 395-amino-acid chain; its full sequence is Ribosomal RNA small subunit methyltransferase H (395 aa).

S-adenosyl-L-methionine-binding positions include 101 to 103 (GGH), D120, Y147, D171, and Q178.

The protein belongs to the methyltransferase superfamily. RsmH family.

It is found in the cytoplasm. The catalysed reaction is cytidine(1402) in 16S rRNA + S-adenosyl-L-methionine = N(4)-methylcytidine(1402) in 16S rRNA + S-adenosyl-L-homocysteine + H(+). Functionally, specifically methylates the N4 position of cytidine in position 1402 (C1402) of 16S rRNA. The chain is Ribosomal RNA small subunit methyltransferase H from Mycobacterium ulcerans (strain Agy99).